The chain runs to 83 residues: Cytochrome c oxidase subunit 7A2, mitochondrial (83 aa).

The N-terminal 23 residues, 1–23 (MLRNLLALRQIAKRTISTSSRRQ), are a transit peptide targeting the mitochondrion. Over 24 to 48 (FENKVPEKQKLFQEDNGIPVHLKGG) the chain is Mitochondrial matrix. Lysine 33 carries the post-translational modification N6-acetyllysine. Residues 49 to 77 (IADALLYRATLILTVGGTAYAMYELAVAS) form a helical membrane-spanning segment. Residues 78 to 83 (FPKKQD) are Mitochondrial intermembrane-facing.

It belongs to the cytochrome c oxidase VIIa family. In terms of assembly, component of the cytochrome c oxidase (complex IV, CIV), a multisubunit enzyme composed of 14 subunits. The complex is composed of a catalytic core of 3 subunits MT-CO1, MT-CO2 and MT-CO3, encoded in the mitochondrial DNA, and 11 supernumerary subunits COX4I1 (or COX4I2), COX5A, COX5B, COX6A2 (or COX6A1), COX6B1 (or COX6B2), COX6C, COX7A1 (or COX7A2), COX7B, COX7C, COX8B and NDUFA4, which are encoded in the nuclear genome. The complex exists as a monomer or a dimer and forms supercomplexes (SCs) in the inner mitochondrial membrane with NADH-ubiquinone oxidoreductase (complex I, CI) and ubiquinol-cytochrome c oxidoreductase (cytochrome b-c1 complex, complex III, CIII), resulting in different assemblies (supercomplex SCI(1)III(2)IV(1) and megacomplex MCI(2)III(2)IV(2)). Interacts with PET100.

It is found in the mitochondrion inner membrane. It functions in the pathway energy metabolism; oxidative phosphorylation. Its function is as follows. Component of the cytochrome c oxidase, the last enzyme in the mitochondrial electron transport chain which drives oxidative phosphorylation. The respiratory chain contains 3 multisubunit complexes succinate dehydrogenase (complex II, CII), ubiquinol-cytochrome c oxidoreductase (cytochrome b-c1 complex, complex III, CIII) and cytochrome c oxidase (complex IV, CIV), that cooperate to transfer electrons derived from NADH and succinate to molecular oxygen, creating an electrochemical gradient over the inner membrane that drives transmembrane transport and the ATP synthase. Cytochrome c oxidase is the component of the respiratory chain that catalyzes the reduction of oxygen to water. Electrons originating from reduced cytochrome c in the intermembrane space (IMS) are transferred via the dinuclear copper A center (CU(A)) of subunit 2 and heme A of subunit 1 to the active site in subunit 1, a binuclear center (BNC) formed by heme A3 and copper B (CU(B)). The BNC reduces molecular oxygen to 2 water molecules using 4 electrons from cytochrome c in the IMS and 4 protons from the mitochondrial matrix. The polypeptide is Cytochrome c oxidase subunit 7A2, mitochondrial (COX7A2) (Bos taurus (Bovine)).